The following is a 98-amino-acid chain: Cystatin-B (98 aa).

Methionine 1 is modified (N-acetylmethionine). Positions 46–50 (QVVAG) match the Secondary area of contact motif.

Belongs to the cystatin family. In terms of assembly, able to form dimers stabilized by noncovalent forces.

It localises to the cytoplasm. The protein localises to the nucleus. This is an intracellular thiol proteinase inhibitor. Tightly binding reversible inhibitor of cathepsins L, H and B. The polypeptide is Cystatin-B (CSTB) (Pongo pygmaeus (Bornean orangutan)).